A 190-amino-acid chain; its full sequence is Guanylate kinase (190 aa).

The 183-residue stretch at 3-185 (NYIFIVSAPS…SLEQFCKYFE (183 aa)) folds into the Guanylate kinase-like domain. ATP is bound at residue 10 to 17 (APSGAGKS).

Belongs to the guanylate kinase family.

It is found in the cytoplasm. It catalyses the reaction GMP + ATP = GDP + ADP. Its function is as follows. Essential for recycling GMP and indirectly, cGMP. In Francisella tularensis subsp. tularensis (strain FSC 198), this protein is Guanylate kinase.